The primary structure comprises 65 residues: Small ribosomal subunit protein bS21 (65 aa).

Belongs to the bacterial ribosomal protein bS21 family.

This is Small ribosomal subunit protein bS21 from Chlorobium chlorochromatii (strain CaD3).